The following is a 161-amino-acid chain: Arachidonate 5-lipoxygenase-activating protein (161 aa).

Residues 1–8 (MDQETVGN) lie on the Lumenal side of the membrane. Residues 9–30 (VVLLAIVTLISVVQNGFFAHKV) traverse the membrane as a helical segment. Over 31-52 (EHESRTQNGRSFQRTGTLAFER) the chain is Cytoplasmic. A helical membrane pass occupies residues 53–77 (VYTANQNCVDAYPTFLAVLWSAGLL). Topologically, residues 78–80 (CSQ) are lumenal. A helical transmembrane segment spans residues 81–102 (VPAAFAGLMYLFVRQKYFVGYL). Over 103-107 (GERTQ) the chain is Cytoplasmic. Residues 108-115 (STPGYIFG) lie within the membrane without spanning it. A helical transmembrane segment spans residues 116–128 (KRIILFLFLMSVA). Topologically, residues 129-161 (GIFNYYLIFFFGSDFENYIKTISTTISPLLLIP) are lumenal.

The protein belongs to the MAPEG family. In terms of assembly, homotrimer. Interacts with LTC4S and ALOX5.

Its subcellular location is the nucleus membrane. It localises to the endoplasmic reticulum membrane. Functionally, required for leukotriene biosynthesis by ALOX5 (5-lipoxygenase). Anchors ALOX5 to the membrane. Binds arachidonic acid, and could play an essential role in the transfer of arachidonic acid to ALOX5. Binds to MK-886, a compound that blocks the biosynthesis of leukotrienes. The chain is Arachidonate 5-lipoxygenase-activating protein (ALOX5AP) from Homo sapiens (Human).